Reading from the N-terminus, the 219-residue chain is Thiamine-phosphate synthase (219 aa).

4-amino-2-methyl-5-(diphosphooxymethyl)pyrimidine contacts are provided by residues glutamine 44–lysine 48 and asparagine 79. Mg(2+)-binding residues include aspartate 80 and aspartate 99. Position 117 (serine 117) interacts with 4-amino-2-methyl-5-(diphosphooxymethyl)pyrimidine. Threonine 143–threonine 145 contributes to the 2-[(2R,5Z)-2-carboxy-4-methylthiazol-5(2H)-ylidene]ethyl phosphate binding site. Residue lysine 146 participates in 4-amino-2-methyl-5-(diphosphooxymethyl)pyrimidine binding. 2-[(2R,5Z)-2-carboxy-4-methylthiazol-5(2H)-ylidene]ethyl phosphate contacts are provided by residues glycine 175 and isoleucine 195–serine 196.

It belongs to the thiamine-phosphate synthase family. It depends on Mg(2+) as a cofactor.

The catalysed reaction is 2-[(2R,5Z)-2-carboxy-4-methylthiazol-5(2H)-ylidene]ethyl phosphate + 4-amino-2-methyl-5-(diphosphooxymethyl)pyrimidine + 2 H(+) = thiamine phosphate + CO2 + diphosphate. It catalyses the reaction 2-(2-carboxy-4-methylthiazol-5-yl)ethyl phosphate + 4-amino-2-methyl-5-(diphosphooxymethyl)pyrimidine + 2 H(+) = thiamine phosphate + CO2 + diphosphate. It carries out the reaction 4-methyl-5-(2-phosphooxyethyl)-thiazole + 4-amino-2-methyl-5-(diphosphooxymethyl)pyrimidine + H(+) = thiamine phosphate + diphosphate. The protein operates within cofactor biosynthesis; thiamine diphosphate biosynthesis; thiamine phosphate from 4-amino-2-methyl-5-diphosphomethylpyrimidine and 4-methyl-5-(2-phosphoethyl)-thiazole: step 1/1. Its function is as follows. Condenses 4-methyl-5-(beta-hydroxyethyl)thiazole monophosphate (THZ-P) and 2-methyl-4-amino-5-hydroxymethyl pyrimidine pyrophosphate (HMP-PP) to form thiamine monophosphate (TMP). In Bacillus anthracis (strain A0248), this protein is Thiamine-phosphate synthase.